A 380-amino-acid chain; its full sequence is Cytochrome b (380 aa).

4 helical membrane passes run F34–M54, W78–I99, W114–L134, and F179–T199. Residues H84 and H98 each coordinate heme b. Positions 183 and 197 each coordinate heme b. An a ubiquinone-binding site is contributed by H202. 4 helical membrane-spanning segments follow: residues L227–S247, L289–H309, L321–S341, and F348–P368.

It belongs to the cytochrome b family. In terms of assembly, the cytochrome bc1 complex contains 11 subunits: 3 respiratory subunits (MT-CYB, CYC1 and UQCRFS1), 2 core proteins (UQCRC1 and UQCRC2) and 6 low-molecular weight proteins (UQCRH/QCR6, UQCRB/QCR7, UQCRQ/QCR8, UQCR10/QCR9, UQCR11/QCR10 and a cleavage product of UQCRFS1). This cytochrome bc1 complex then forms a dimer. Heme b is required as a cofactor.

It localises to the mitochondrion inner membrane. Functionally, component of the ubiquinol-cytochrome c reductase complex (complex III or cytochrome b-c1 complex) that is part of the mitochondrial respiratory chain. The b-c1 complex mediates electron transfer from ubiquinol to cytochrome c. Contributes to the generation of a proton gradient across the mitochondrial membrane that is then used for ATP synthesis. This chain is Cytochrome b (MT-CYB), found in Gallus lafayettii (Sri Lanka junglefowl).